The sequence spans 150 residues: Ribonuclease K6 (150 aa).

The first 23 residues, 1–23 (MVLCFPLLLLLLVLWGPVCPLHA), serve as a signal peptide directing secretion. Residue His38 is the Proton acceptor of the active site. 4 disulfide bridges follow: Cys46-Cys104, Cys60-Cys114, Cys78-Cys129, and Cys85-Cys92. Asn55 carries an N-linked (GlcNAc...) asparagine glycan. Residues 61–65 (KHQNT) and Lys86 each bind substrate. An N-linked (GlcNAc...) asparagine glycan is attached at Asn100. Arg105 contacts substrate. Residue His145 is the Proton donor of the active site.

It belongs to the pancreatic ribonuclease family. Interacts (via N-terminus) with bacterial lipopolysaccharide (LPS). As to expression, highly expressed in spleen (at protein level). Has little or no expression in healthy kidneys (at protein level). Detected in interstitial leukocytes in infected kidneys (at protein level). Expressed in ureter where it localizes to urothelial and submucosal leukocytes (at protein level). Strong expression in lung and thymus, and lower expression in heart, placenta, pancreas, liver, brain and skeletal muscle. Also expressed in monocytes and neutrophils.

It is found in the secreted. Its subcellular location is the lysosome. The protein resides in the cytoplasmic granule. Functionally, ribonuclease which shows a preference for the pyrimidines uridine and cytosine. Has potent antibacterial activity against a range of Gram-positive and Gram-negative bacteria, including P.aeruginosa, A.baumanii, M.luteus, S.aureus, E.faecalis, E.faecium, S.saprophyticus and E.coli. Causes loss of bacterial membrane integrity, and also promotes agglutination of Gram-negative bacteria. Probably contributes to urinary tract sterility. Bactericidal activity is independent of RNase activity. This Homo sapiens (Human) protein is Ribonuclease K6 (RNASE6).